A 439-amino-acid polypeptide reads, in one-letter code: Maintenance of mitochondrial morphology protein 1 (439 aa).

Residues 1 to 76 (MSQDLIETTA…NGNTWSFTQG (76 aa)) lie on the Lumenal side of the membrane. The chain crosses the membrane as a helical span at residues 77 to 97 (LVIGQVSVIFIIIVFVKFFVF). Residues 98 to 439 (ADSSSHIPTK…TPGEYVNSNI (342 aa)) are Cytoplasmic-facing. 3 disordered regions span residues 125-145 (KHSNGQFANDGENEDDTSLDS), 309-336 (MNGYSKENANGDGASSSNNDEDEDDGGT), and 405-425 (REPVTKKTTTTPSTTVNGTSA). Positions 165 to 395 (ASESLDWFNV…EPRFQVVRLP (231 aa)) constitute an SMP-LTD domain. Low complexity-rich tracts occupy residues 315 to 326 (ENANGDGASSSN) and 410 to 424 (KKTTTTPSTTVNGTS).

Belongs to the MMM1 family. As to quaternary structure, homodimer. Component of the ER-mitochondria encounter structure (ERMES) or MDM complex, composed of MMM1, MDM10, MDM12 and MDM34. An MMM1 homodimer associates with one molecule of MDM12 on each side in a pairwise head-to-tail manner, and the SMP-LTD domains of MMM1 and MDM12 generate a continuous hydrophobic tunnel for phospholipid trafficking.

The protein localises to the endoplasmic reticulum membrane. Its function is as follows. Component of the ERMES/MDM complex, which serves as a molecular tether to connect the endoplasmic reticulum (ER) and mitochondria. Components of this complex are involved in the control of mitochondrial shape and protein biogenesis, and function in nonvesicular lipid trafficking between the ER and mitochondria. The MDM12-MMM1 subcomplex functions in the major beta-barrel assembly pathway that is responsible for biogenesis of all outer membrane beta-barrel proteins, and acts in a late step after the SAM complex. The MDM10-MDM12-MMM1 subcomplex further acts in the TOM40-specific pathway after the action of the MDM12-MMM1 complex. Essential for establishing and maintaining the structure of mitochondria and maintenance of mtDNA nucleoids. The polypeptide is Maintenance of mitochondrial morphology protein 1 (Candida albicans (strain WO-1) (Yeast)).